A 204-amino-acid polypeptide reads, in one-letter code: Large ribosomal subunit protein uL13 (204 aa).

The protein belongs to the universal ribosomal protein uL13 family.

The polypeptide is Large ribosomal subunit protein uL13 (RpL13A) (Spodoptera frugiperda (Fall armyworm)).